A 230-amino-acid polypeptide reads, in one-letter code: Uracil-DNA glycosylase (230 aa).

Asp70 (proton acceptor) is an active-site residue.

This sequence belongs to the uracil-DNA glycosylase (UDG) superfamily. UNG family.

It is found in the cytoplasm. The catalysed reaction is Hydrolyzes single-stranded DNA or mismatched double-stranded DNA and polynucleotides, releasing free uracil.. Functionally, excises uracil residues from the DNA which can arise as a result of misincorporation of dUMP residues by DNA polymerase or due to deamination of cytosine. The chain is Uracil-DNA glycosylase from Pseudomonas putida (strain ATCC 700007 / DSM 6899 / JCM 31910 / BCRC 17059 / LMG 24140 / F1).